A 499-amino-acid chain; its full sequence is Aspartyl/glutamyl-tRNA(Asn/Gln) amidotransferase subunit B (499 aa).

It belongs to the GatB/GatE family. GatB subfamily. Heterotrimer of A, B and C subunits.

The enzyme catalyses L-glutamyl-tRNA(Gln) + L-glutamine + ATP + H2O = L-glutaminyl-tRNA(Gln) + L-glutamate + ADP + phosphate + H(+). It catalyses the reaction L-aspartyl-tRNA(Asn) + L-glutamine + ATP + H2O = L-asparaginyl-tRNA(Asn) + L-glutamate + ADP + phosphate + 2 H(+). Allows the formation of correctly charged Asn-tRNA(Asn) or Gln-tRNA(Gln) through the transamidation of misacylated Asp-tRNA(Asn) or Glu-tRNA(Gln) in organisms which lack either or both of asparaginyl-tRNA or glutaminyl-tRNA synthetases. The reaction takes place in the presence of glutamine and ATP through an activated phospho-Asp-tRNA(Asn) or phospho-Glu-tRNA(Gln). The protein is Aspartyl/glutamyl-tRNA(Asn/Gln) amidotransferase subunit B of Salinispora arenicola (strain CNS-205).